Consider the following 156-residue polypeptide: Succinate dehydrogenase assembly factor 2-B, mitochondrial (156 aa).

The transit peptide at 1 to 24 (MLRQFIISRVGRRLQLPMITQSRL) directs the protein to the mitochondrion.

The protein belongs to the SDHAF2 family. Interacts with the flavoprotein subunit within the SDH catalytic dimer.

The protein resides in the mitochondrion matrix. Plays an essential role in the assembly of succinate dehydrogenase (SDH), an enzyme complex (also referred to as respiratory complex II) that is a component of both the tricarboxylic acid (TCA) cycle and the mitochondrial electron transport chain, and which couples the oxidation of succinate to fumarate with the reduction of ubiquinone (coenzyme Q) to ubiquinol. Required for flavinylation (covalent attachment of FAD) of the flavoprotein subunit of the SDH catalytic dimer. This Drosophila sechellia (Fruit fly) protein is Succinate dehydrogenase assembly factor 2-B, mitochondrial.